Consider the following 147-residue polypeptide: Myoglobin (147 aa).

The Globin domain occupies 2–141; sequence ADFDMVLKCW…IIADMEADYK (140 aa). H60 provides a ligand contact to nitrite. H60 contacts O2. H89 is a binding site for heme b.

The protein belongs to the globin family. As to quaternary structure, monomeric.

Its subcellular location is the cytoplasm. It localises to the sarcoplasm. It catalyses the reaction Fe(III)-heme b-[protein] + nitric oxide + H2O = Fe(II)-heme b-[protein] + nitrite + 2 H(+). The catalysed reaction is H2O2 + AH2 = A + 2 H2O. Its function is as follows. Monomeric heme protein which primary function is to store oxygen and facilitate its diffusion within muscle tissues. Reversibly binds oxygen through a pentacoordinated heme iron and enables its timely and efficient release as needed during periods of heightened demand. Depending on the oxidative conditions of tissues and cells, and in addition to its ability to bind oxygen, it also has a nitrite reductase activity whereby it regulates the production of bioactive nitric oxide. Under stress conditions, like hypoxia and anoxia, it also protects cells against reactive oxygen species thanks to its pseudoperoxidase activity. This Pseudochaenichthys georgianus (South Georgia icefish) protein is Myoglobin (mb).